Consider the following 691-residue polypeptide: POU domain, class 6, transcription factor 2 (691 aa).

3 disordered regions span residues 1 to 61 (MIAG…RGNT), 188 to 297 (QQQQ…LQLV), and 435 to 461 (GQAA…SALS). The span at 17 to 28 (MNAELRGEDKAA) shows a compositional bias: basic and acidic residues. Composition is skewed to low complexity over residues 188-197 (QQQQQQQQQQ) and 206-216 (QHPQPASQAPP). Over residues 217–237 (QSQPTPPHQPPPASQQLPAPP) the composition is skewed to pro residues. The segment covering 238–272 (AQLEQATQPQQHQPHSHPQNQTQNQPSPTQQSSSP) has biased composition (low complexity). Residues 437–447 (AATSHSPVRQA) show a composition bias toward polar residues. Over residues 448–458 (SSSSSSSSSSS) the composition is skewed to low complexity. A POU-specific domain is found at 476-586 (VDGVNLEEIR…VLERWMAEAE (111 aa)). Positions 607 to 666 (KRKRRTSFTPQALEILNAHFEKNTHPSGQEMTEIAEKLNYDREVVRVWFCNKRQALKNTI) form a DNA-binding region, homeobox. The segment at 670–691 (KQHEPTSAAPLEPLADSPEENC) is disordered.

It belongs to the POU transcription factor family. Class-6 subfamily. In terms of tissue distribution, expressed in kidney, heart, muscle, spleen and ovary, but not in lung.

It localises to the nucleus. Probable transcription factor likely to be involved in early steps in the differentiation of amacrine and ganglion cells. Recognizes and binds to the DNA sequence 5'-ATGCAAAT-3'. The chain is POU domain, class 6, transcription factor 2 (Pou6f2) from Mus musculus (Mouse).